The following is a 443-amino-acid chain: Signal recognition particle 54 kDa protein (443 aa).

GTP is bound by residues 107–114, 189–193, and 247–250; these read GIQGSGKT, DTAGR, and TKLD.

The protein belongs to the GTP-binding SRP family. SRP54 subfamily. As to quaternary structure, part of the signal recognition particle protein translocation system, which is composed of SRP and FtsY. Archaeal SRP consists of a 7S RNA molecule of 300 nucleotides and two protein subunits: SRP54 and SRP19.

It localises to the cytoplasm. It catalyses the reaction GTP + H2O = GDP + phosphate + H(+). In terms of biological role, involved in targeting and insertion of nascent membrane proteins into the cytoplasmic membrane. Binds to the hydrophobic signal sequence of the ribosome-nascent chain (RNC) as it emerges from the ribosomes. The SRP-RNC complex is then targeted to the cytoplasmic membrane where it interacts with the SRP receptor FtsY. The chain is Signal recognition particle 54 kDa protein from Pyrococcus furiosus (strain ATCC 43587 / DSM 3638 / JCM 8422 / Vc1).